The sequence spans 532 residues: uncharacterized protein (532 aa).

Transmembrane regions (helical) follow at residues 7-26, 30-52, 59-77, 87-109, 116-134, and 139-161; these read HSSY…LGRI, GLSL…GVII, FGLV…PGFF, LIII…KYAF, VVGL…AVAI, and SPLA…ILFV. RCK C-terminal domains follow at residues 179–262 and 263–346; these read LEIE…LVGE and REEG…LLGN. A run of 4 helical transmembrane segments spans residues 356 to 378, 388 to 410, 446 to 468, and 509 to 531; these read FFPI…SFPG, GGVL…LWSM, GLLL…AFVG, and YATV…ATVV.

It belongs to the AAE transporter (TC 2.A.81) family.

It localises to the cell membrane. This is an uncharacterized protein from Bacteroides fragilis (strain YCH46).